The sequence spans 391 residues: GTPase Obg (391 aa).

Positions 1 to 159 (MKFIDEALIR…RDLLLELMLL (159 aa)) constitute an Obg domain. The OBG-type G domain occupies 160-333 (ADVGMLGLPN…LTRDIMDFIE (174 aa)). GTP contacts are provided by residues 166–173 (GLPNAGKS), 191–195 (FTTLV), 213–216 (DIPG), 283–286 (NKID), and 314–316 (SAA). Mg(2+) contacts are provided by Ser173 and Thr193.

It belongs to the TRAFAC class OBG-HflX-like GTPase superfamily. OBG GTPase family. Monomer. Requires Mg(2+) as cofactor.

It is found in the cytoplasm. In terms of biological role, an essential GTPase which binds GTP, GDP and possibly (p)ppGpp with moderate affinity, with high nucleotide exchange rates and a fairly low GTP hydrolysis rate. Plays a role in control of the cell cycle, stress response, ribosome biogenesis and in those bacteria that undergo differentiation, in morphogenesis control. The polypeptide is GTPase Obg (Haemophilus ducreyi (strain 35000HP / ATCC 700724)).